Reading from the N-terminus, the 232-residue chain is Protein lin-7 homolog A (232 aa).

The Kinase interacting site motif lies at 14–28; it reads MATLTVVQPLTLDRD. One can recognise an L27 domain in the interval 25–80; sequence LDRDVARAIELLEKLQESGEVPVHKLQSLKKVLQSEFCTAIREVYQYMHETITVNG. In terms of domain architecture, PDZ spans 108–190; the sequence is VVELPKTDEG…SVKLVVRYTP (83 aa).

The protein belongs to the lin-7 family. Forms a complex with CASK and CASKIN1. Component of the brain-specific heterotrimeric complex (LIN-10-LIN-2-LIN-7 complex) composed of at least APBA1, CASK, and LIN7, which associates with the motor protein KIF17 to transport vesicles along microtubules. Can also interact with other modular proteins containing protein-protein interaction domains like PALS1, PALS2, MPP7, DLG1, DLG2 and DLG3 through its L27 domain. Interacts with DLG4 and GRIN2B as well as CDH1 and CTNNB1, the channels KCNJ12/Kir2.2, KCNJ4/Kir2.3 and probably KCNJ2/Kir2.1 and SLC6A12/BGT-1 via its PDZ domain. The association of LIN7A with cadherin and beta-catenin is calcium-dependent, occurs at synaptic junctions and requires the actin cytoskeleton. Interacts with EGFR, ERBB2, ERBB3 and ERBB4 with both PDZ and KID domains. Associates with KIF17 via APBA1. Interacts with HTR4. Forms a tripartite complex composed of DLG1, MPP7 and LIN7 (LIN7A or LIN7C). Interacts with MARCHF11. In terms of tissue distribution, ubiquitously expressed in brain and detected in lung, liver and testis (at protein level). Expression was detected only in brain.

The protein localises to the cell membrane. Its subcellular location is the basolateral cell membrane. The protein resides in the cell junction. It localises to the postsynaptic density membrane. It is found in the tight junction. Functionally, plays a role in establishing and maintaining the asymmetric distribution of channels and receptors at the plasma membrane of polarized cells. Forms membrane-associated multiprotein complexes that may regulate delivery and recycling of proteins to the correct membrane domains. The tripartite complex composed of LIN7 (LIN7A, LIN7B or LIN7C), CASK and APBA1 associates with the motor protein KIF17 to transport vesicles containing N-methyl-D-aspartate (NMDA) receptor subunit NR2B along microtubules. This complex may have the potential to couple synaptic vesicle exocytosis to cell adhesion in brain. Ensures the proper localization of GRIN2B (subunit 2B of the NMDA receptor) to neuronal postsynaptic density and may function in localizing synaptic vesicles at synapses where it is recruited by beta-catenin and cadherin. Required to localize Kir2 channels, GABA transporter (SLC6A12) and EGFR/ERBB1, ERBB2, ERBB3 and ERBB4 to the basolateral membrane of epithelial cells. The polypeptide is Protein lin-7 homolog A (Lin7a) (Rattus norvegicus (Rat)).